A 71-amino-acid polypeptide reads, in one-letter code: SRY-related protein LG27 (71 aa).

The HMG box DNA-binding region spans 1–68 (VKRPMNAFMV…KHMADYPNYK (68 aa)).

The protein resides in the nucleus. The polypeptide is SRY-related protein LG27 (Eublepharis macularius (Leopard gecko)).